Reading from the N-terminus, the 83-residue chain is uncharacterized protein (83 aa).

A run of 2 helical transmembrane segments spans residues 11 to 31 (FYCIVTIPSAFVVLTVISFLL) and 48 to 68 (WHNLLFLIPFGLFFYPVHIWM).

Its subcellular location is the cell membrane. This is an uncharacterized protein from Bacillus subtilis (strain 168).